Here is a 169-residue protein sequence, read N- to C-terminus: Lipoprotein signal peptidase (169 aa).

3 helical membrane passes run Trp12–Gly32, Trp70–Ser90, and Ala102–Val122. Active-site residues include Asp123 and Asp141. Residues Phe137 to Leu157 traverse the membrane as a helical segment.

It belongs to the peptidase A8 family.

The protein localises to the cell inner membrane. It catalyses the reaction Release of signal peptides from bacterial membrane prolipoproteins. Hydrolyzes -Xaa-Yaa-Zaa-|-(S,diacylglyceryl)Cys-, in which Xaa is hydrophobic (preferably Leu), and Yaa (Ala or Ser) and Zaa (Gly or Ala) have small, neutral side chains.. The protein operates within protein modification; lipoprotein biosynthesis (signal peptide cleavage). Its function is as follows. This protein specifically catalyzes the removal of signal peptides from prolipoproteins. The sequence is that of Lipoprotein signal peptidase from Serratia proteamaculans (strain 568).